The following is an 86-amino-acid chain: YcgL domain-containing protein XCV4171 (86 aa).

The region spanning 1 to 83 is the YcgL domain; it reads MHAYVYKSQR…PKTIVLAGEC (83 aa).

This chain is YcgL domain-containing protein XCV4171, found in Xanthomonas euvesicatoria pv. vesicatoria (strain 85-10) (Xanthomonas campestris pv. vesicatoria).